Reading from the N-terminus, the 260-residue chain is Pro-thyrotropin-releasing hormone (260 aa).

The first 24 residues, Met-1–Gln-24, serve as a signal peptide directing secretion. The tract at residues Pro-72–Arg-112 is disordered. Pyrrolidone carboxylic acid is present on Gln-79. Pro-81 is modified (proline amide). Positions Tyr-85–Arg-112 are enriched in basic and acidic residues. A Pyrrolidone carboxylic acid modification is found at Gln-93. The residue at position 95 (Pro-95) is a Proline amide. Gln-113 bears the Pyrrolidone carboxylic acid mark. Leucine amide is present on Leu-115. The residue at position 134 (Gln-134) is a Pyrrolidone carboxylic acid. Residue Pro-136 is modified to Proline amide. Gln-163 bears the Pyrrolidone carboxylic acid mark. Position 165 is a proline amide (Pro-165). Residues Lys-195–Asp-207 are compositionally biased toward basic and acidic residues. 2 disordered regions span residues Lys-195–Leu-217 and Lys-238–Glu-260. At Gln-246 the chain carries Pyrrolidone carboxylic acid. Pro-248 bears the Proline amide mark.

It belongs to the TRH family.

It localises to the secreted. Functionally, functions as a regulator of the biosynthesis of TSH in the anterior pituitary gland and as a neurotransmitter/ neuromodulator in the central and peripheral nervous systems. This is Pro-thyrotropin-releasing hormone (TRH) from Gallus gallus (Chicken).